We begin with the raw amino-acid sequence, 301 residues long: Acetylglutamate kinase (301 aa).

Substrate is bound by residues 72-73 (GG), Arg94, and Asn199.

It belongs to the acetylglutamate kinase family. ArgB subfamily.

The protein resides in the cytoplasm. The enzyme catalyses N-acetyl-L-glutamate + ATP = N-acetyl-L-glutamyl 5-phosphate + ADP. It participates in amino-acid biosynthesis; L-arginine biosynthesis; N(2)-acetyl-L-ornithine from L-glutamate: step 2/4. Functionally, catalyzes the ATP-dependent phosphorylation of N-acetyl-L-glutamate. The chain is Acetylglutamate kinase from Azorhizobium caulinodans (strain ATCC 43989 / DSM 5975 / JCM 20966 / LMG 6465 / NBRC 14845 / NCIMB 13405 / ORS 571).